A 1050-amino-acid polypeptide reads, in one-letter code: Toll-like receptor 7 (1050 aa).

Positions 1-26 are cleaved as a signal peptide; the sequence is MVFSMWTRKRQILIFLNMLLVSRVFG. Residues 27-837 lie on the Extracellular side of the membrane; sequence FRWFPKTLPC…SLDLYTCELD (811 aa). LRR repeat units follow at residues 42–64, 65–87, 89–111, 126–149, 151–170, 171–195, 203–226, 228–247, 248–273, 275–289, 290–312, 314–337, 339–364, 369–392, 396–419, 421–443, 493–516, 517–542, 543–565, and 567–589; these read IPEAHVIVDCTDKHLTEIPEGIP, TNTTNLTLTINHIPSISPDSFRR, NHLEEIDLRCNCVPVLLGSKANV, LSDLKALYLDGNQLLEIPQDLPSS, HLLSLEANNIFSITKENLTE, LVNIETLYLGQNCYYRNPCNVSYSI, MRNLKVLSLKDNNVTAVPTTLPPN, LELYLYNNIIKKIQENDFNN, LNELQVLDLSGNCPRCYNVPYPCTPC, NNSPLQIHDNAFNSL, TELKVLRLHSNSLQHVPPTWFKN, RNLQELDLSQNYLAREIEEAKFLH, LPNLVELDFSFNYELQVYHASITLPH, LENLKILRVKGYVFKELKNSSLSV, LPRLEVLDLGTNFIKIADLNIFKH, ENLKLIDLSVNKISPSEESREVG, HIYGQTLDLSRNNIFFIKPSDFQH, LSFLKCLNLSGNTIGQTLNGSELWPL, RELRYLDFSNNRLDLLYSTAFEE, and QSLEVLDLSSNSHYFQAEGITHM. N-linked (GlcNAc...) asparagine glycosylation is found at N66 and N69. 3 N-linked (GlcNAc...) asparagine glycosylation sites follow: N167, N190, and N215. N-linked (GlcNAc...) asparagine glycosylation is present at N387. N524 and N535 each carry an N-linked (GlcNAc...) asparagine glycan. The N-linked (GlcNAc...) asparagine glycan is linked to N591. LRR repeat units lie at residues 596–619, 620–645, 650–673, 675–698, 699–722, 724–746, 747–770, and 773–796; these read LRLLDKLMMNDNDISTSASRTMES, DSLRILEFRGNHLDVLWRAGDNRYLD, LFNLEVLDISRNSLNSLPPEVFEG, PPNLKNLSLAKNGLKSFFWDRLQL, LKHLEILDLSHNQLTKVPERLANC, KSLTTLILKHNQIRQLTKYFLED, ALQLRYLDISSNKIQVIQKTSFPE, and LNNLEMLVLHHNRFLCNCDAVWFV. Residues N680 and N721 are each glycosylated (N-linked (GlcNAc...) asparagine). N-linked (GlcNAc...) asparagine glycosylation is present at N800. A helical transmembrane segment spans residues 838-858; the sequence is LTNLILFSVSISSVLFLMVVM. At 859-1050 the chain is on the cytoplasmic side; that stretch reads TTSHLFFWDM…AYSQMFKETV (192 aa). Residues 890-1034 form the TIR domain; that stretch reads SCYDAFIVYD…YFWQCLKNAL (145 aa).

It belongs to the Toll-like receptor family. As to quaternary structure, homodimer. Interacts with MYD88 via their respective TIR domains. Interacts with UNC93B1. Interacts with SMPDL3B. The first cleavage is performed by asparagine endopeptidase or cathepsin family members. This initial cleavage event is followed by a trimming event that is solely cathepsin mediated and required for optimal receptor signaling.

Its subcellular location is the endosome membrane. It localises to the endoplasmic reticulum membrane. The protein resides in the lysosome. It is found in the cytoplasmic vesicle. The protein localises to the phagosome. With respect to regulation, activated by guanosine analogs including deoxyguanosine, 7-thia-8-oxoguanosine or 7-deazaguanosine in a RNA-independent manner. Endosomal receptor that plays a key role in innate and adaptive immunity. Controls host immune response against pathogens through recognition of uridine-containing single strand RNAs (ssRNAs) of viral origin or guanosine analogs. Upon binding to agonists, undergoes dimerization that brings TIR domains from the two molecules into direct contact, leading to the recruitment of TIR-containing downstream adapter MYD88 through homotypic interaction. In turn, the Myddosome signaling complex is formed involving IRAK4, IRAK1, TRAF6, TRAF3 leading to activation of downstream transcription factors NF-kappa-B and IRF7 to induce pro-inflammatory cytokines and interferons, respectively. In plasmacytoid dendritic cells, RNASET2 endonuclease cooperates with PLD3 or PLD4 5'-&gt;3' exonucleases to process RNA and release 2',3'-cyclic guanosine monophosphate (2',3'-cGMP) and cytidine-rich RNA fragments that occupy TLR7 ligand-binding pockets and trigger a signaling-competent state. The sequence is that of Toll-like receptor 7 (Tlr7) from Mus musculus (Mouse).